We begin with the raw amino-acid sequence, 191 residues long: Large ribosomal subunit protein uL3 (191 aa).

A disordered region spans residues 115–137 (GGPASHGSRFHRRHGSIGNREWP).

The protein belongs to the universal ribosomal protein uL3 family. In terms of assembly, part of the 50S ribosomal subunit. Forms a cluster with proteins L14 and L19.

In terms of biological role, one of the primary rRNA binding proteins, it binds directly near the 3'-end of the 23S rRNA, where it nucleates assembly of the 50S subunit. The polypeptide is Large ribosomal subunit protein uL3 (rplC) (Campylobacter jejuni subsp. jejuni serotype O:2 (strain ATCC 700819 / NCTC 11168)).